The primary structure comprises 682 residues: Methionine synthase reductase (682 aa).

One can recognise a Flavodoxin-like domain in the interval Phe4–Phe147. Position 93-124 (Leu93–Phe124) interacts with FMN. The FAD-binding FR-type domain maps to Thr271–Pro516. Lys293 lines the NADP(+) pocket. FAD is bound by residues Arg455–Ser458 and Gly488–Thr491. Residues Arg607 to Gln609 and Asp643 each bind NADP(+). FAD is bound at residue Trp681.

FAD serves as cofactor. FMN is required as a cofactor.

It carries out the reaction 2 methylcob(III)alamin-[methionine synthase] + 2 S-adenosyl-L-homocysteine + NADP(+) + H(+) = 2 cob(II)alamin-[methionine synthase] + 2 S-adenosyl-L-methionine + NADPH. Functionally, involved in the reductive regeneration of cob(I)alamin cofactor required for the maintenance of methionine synthase in a functional state. In Caenorhabditis elegans, this protein is Methionine synthase reductase.